Reading from the N-terminus, the 172-residue chain is Putative B3 domain-containing protein At1g05615 (172 aa).

A DNA-binding region (TF-B3) is located at residues 69-169 (VDEGKIIDFE…NLAMVPLTPT (101 aa)).

It is found in the nucleus. In Arabidopsis thaliana (Mouse-ear cress), this protein is Putative B3 domain-containing protein At1g05615.